We begin with the raw amino-acid sequence, 217 residues long: KS1 protein (217 aa).

Residues 1-16 form the signal peptide; that stretch reads MKLIIVLVMMLVCVYS. The span at 24 to 47 shows a compositional bias: basic and acidic residues; the sequence is PKNHEVPAKKQFAETKVEKKKRSD. Disordered regions lie at residues 24–58 and 72–205; these read PKNH…DDDD and EDDD…LKIK. 2 repeat units span residues 32–81 and 98–147. A 2 X 50 AA approximate repeats region spans residues 32–147; it reads KKQFAETKVE…EEDDDCYDED (116 aa). Composition is skewed to acidic residues over residues 48–58 and 72–94; these read DGDEEICDDDD and EDDD…DDCQ. Over residues 98-110 the composition is skewed to basic residues; the sequence is KKKKRETKPKLKK. Positions 114–145 are enriched in acidic residues; sequence DEEEEECEEDDEDCEVEVDIEECDEEDDDCYD. Positions 149-188 are enriched in basic residues; sequence KKKKENKLKKESKKKNSKKTVPKNAKKSSKRSTSTKKTSQ.

In terms of tissue distribution, expressed in tentacle-specific epithelial cells (battery cells) as well as in a small fraction of ectodermal epithelial cells in the gastric region subjacent to the tentacles (the tentacle formation region). The later cells are committed to become battery cells.

In terms of biological role, responds to early signals of head formation in hydra. In Hydra vulgaris (Hydra), this protein is KS1 protein (KS1).